We begin with the raw amino-acid sequence, 306 residues long: Glutathione transport system permease protein GsiC (306 aa).

Over 1-8 the chain is Cytoplasmic; that stretch reads MLNYVIKR. The helical transmembrane segment at 9–29 threads the bilayer; sequence LLGLIPTLFIVSVLVFLFVHM. The Periplasmic portion of the chain corresponds to 30 to 102; the sequence is LPGDPARLIA…SRFMPTLWLT (73 aa). In terms of domain architecture, ABC transmembrane type-1 spans 95-292; the sequence is FMPTLWLTIT…LEFILINLVV (198 aa). The helical transmembrane segment at 103–123 threads the bilayer; that stretch reads ITSMVWAVIFGMAAGIIAAVW. Residues 124–134 lie on the Cytoplasmic side of the membrane; the sequence is RNRWPDRLSMT. A helical membrane pass occupies residues 135–155; it reads IAVSGISFPAFALGMLLIQVF. Residues 156 to 168 lie on the Periplasmic side of the membrane; it reads SVELGWLPTVGAD. Residues 169-189 form a helical membrane-spanning segment; it reads SWQHYILPSLTLGAAVAAVMA. The Cytoplasmic portion of the chain corresponds to 190 to 228; the sequence is RFTRASFVDVLSEDYMRTARAKGVSETWVVLKHGLRNAM. Residues 229-249 form a helical membrane-spanning segment; it reads IPVVTMMGLQFGFLLGGSIVV. Topologically, residues 250 to 277 are periplasmic; the sequence is EKVFNWPGLGRLLVDSVEMRDYPVIQAE. A helical membrane pass occupies residues 278–298; the sequence is ILLFSLEFILINLVVDVLYAA. Topologically, residues 299-306 are cytoplasmic; that stretch reads INPAIRYK.

It belongs to the binding-protein-dependent transport system permease family. In terms of assembly, the complex is composed of two ATP-binding proteins (GsiA), two transmembrane proteins (GsiC and GsiD) and a solute-binding protein (GsiB).

The protein localises to the cell inner membrane. Its function is as follows. Part of the ABC transporter complex GsiABCD involved in glutathione import. Probably responsible for the translocation of the substrate across the membrane. This is Glutathione transport system permease protein GsiC from Escherichia coli O1:K1 / APEC.